Consider the following 311-residue polypeptide: tRNA dimethylallyltransferase (311 aa).

14 to 21 (GPTAVGKT) contacts ATP. Residue 16 to 21 (TAVGKT) participates in substrate binding. Residues 39–42 (DSMQ) form an interaction with substrate tRNA region.

The protein belongs to the IPP transferase family. As to quaternary structure, monomer. Mg(2+) is required as a cofactor.

The catalysed reaction is adenosine(37) in tRNA + dimethylallyl diphosphate = N(6)-dimethylallyladenosine(37) in tRNA + diphosphate. In terms of biological role, catalyzes the transfer of a dimethylallyl group onto the adenine at position 37 in tRNAs that read codons beginning with uridine, leading to the formation of N6-(dimethylallyl)adenosine (i(6)A). This chain is tRNA dimethylallyltransferase, found in Lactiplantibacillus plantarum (strain ATCC BAA-793 / NCIMB 8826 / WCFS1) (Lactobacillus plantarum).